Reading from the N-terminus, the 415-residue chain is Glucose-6-phosphate isomerase (415 aa).

Glutamate 267 functions as the Proton donor in the catalytic mechanism. Residues histidine 293 and lysine 406 contribute to the active site.

It belongs to the GPI family.

Its subcellular location is the cytoplasm. It catalyses the reaction alpha-D-glucose 6-phosphate = beta-D-fructose 6-phosphate. Its pathway is carbohydrate biosynthesis; gluconeogenesis. It participates in carbohydrate degradation; glycolysis; D-glyceraldehyde 3-phosphate and glycerone phosphate from D-glucose: step 2/4. Catalyzes the reversible isomerization of glucose-6-phosphate to fructose-6-phosphate. The protein is Glucose-6-phosphate isomerase of Thermus thermophilus (strain ATCC 27634 / DSM 579 / HB8).